A 58-amino-acid polypeptide reads, in one-letter code: uncharacterized protein (58 aa).

Residues 24 to 44 traverse the membrane as a helical segment; that stretch reads LSVYLGLATTIVCIVLFFTML.

The protein resides in the membrane. This is an uncharacterized protein from Haemophilus influenzae (strain ATCC 51907 / DSM 11121 / KW20 / Rd).